Reading from the N-terminus, the 279-residue chain is Tryptophan synthase alpha chain (279 aa).

Catalysis depends on proton acceptor residues glutamate 49 and aspartate 60.

The protein belongs to the TrpA family. In terms of assembly, tetramer of two alpha and two beta chains.

It catalyses the reaction (1S,2R)-1-C-(indol-3-yl)glycerol 3-phosphate + L-serine = D-glyceraldehyde 3-phosphate + L-tryptophan + H2O. It functions in the pathway amino-acid biosynthesis; L-tryptophan biosynthesis; L-tryptophan from chorismate: step 5/5. The alpha subunit is responsible for the aldol cleavage of indoleglycerol phosphate to indole and glyceraldehyde 3-phosphate. The polypeptide is Tryptophan synthase alpha chain (Nitrosospira multiformis (strain ATCC 25196 / NCIMB 11849 / C 71)).